The chain runs to 407 residues: Protein phosphatase methylesterase 1 (407 aa).

Positions 1-53 (MSDLQKSFAKSKLAKLPPEPPPIPESVADEDDDSGSSTETVTPSPVKQLFARP) are disordered. Residues S185, D211, and H342 contribute to the active site. Gly residues predominate over residues 388-401 (GAGVPLGKAEGGTT). The interval 388 to 407 (GAGVPLGKAEGGTTGSFKRS) is disordered.

Belongs to the AB hydrolase superfamily.

It catalyses the reaction [phosphatase 2A protein]-C-terminal L-leucine methyl ester + H2O = [phosphatase 2A protein]-C-terminal L-leucine + methanol + H(+). Its function is as follows. Demethylates proteins that have been reversibly carboxymethylated. Demethylates the phosphatase PP2A catalytic subunit. The polypeptide is Protein phosphatase methylesterase 1 (ppe1) (Emericella nidulans (strain FGSC A4 / ATCC 38163 / CBS 112.46 / NRRL 194 / M139) (Aspergillus nidulans)).